Reading from the N-terminus, the 86-residue chain is Omega-theraphotoxin-Hhn1a 1 (86 aa).

Positions 1 to 21 (MKSIVFVALFGLALLAVVCSA) are cleaved as a signal peptide. Residues 22–50 (SEDAHKELLKEVVRAMVVDKTDAVQAEER) constitute a propeptide that is removed on maturation. 3 disulfides stabilise this stretch: cysteine 52–cysteine 66, cysteine 59–cysteine 71, and cysteine 65–cysteine 78.

This sequence belongs to the neurotoxin 10 (Hwtx-1) family. 17 (Hntx-9) subfamily. In terms of tissue distribution, expressed by the venom gland.

It is found in the secreted. Ion channel inhibitor. This is Omega-theraphotoxin-Hhn1a 1 from Cyriopagopus hainanus (Chinese bird spider).